The primary structure comprises 161 residues: Regulator of ribonuclease activity A (161 aa).

Belongs to the RraA family. As to quaternary structure, homotrimer. Binds to both RNA-binding sites in the C-terminal region of Rne and to RhlB.

It is found in the cytoplasm. Globally modulates RNA abundance by binding to RNase E (Rne) and regulating its endonucleolytic activity. Can modulate Rne action in a substrate-dependent manner by altering the composition of the degradosome. Modulates RNA-binding and helicase activities of the degradosome. This is Regulator of ribonuclease activity A from Edwardsiella ictaluri (strain 93-146).